A 378-amino-acid chain; its full sequence is Galanin receptor 2b (378 aa).

Residues 1–30 (MSDHEDLNKAMGHWNASESYQLNPASVIVS) lie on the Extracellular side of the membrane. Residues 31 to 51 (VVFSLIFLLGTIGNSLVLAVL) traverse the membrane as a helical segment. Over 52–62 (LRSGQVGYNTT) the chain is Cytoplasmic. Residues 63–83 (NLFILNLSVADFFFIIFCVPF) form a helical membrane-spanning segment. Over 84–101 (QATIYSLEGWVFGSFMCK) the chain is Extracellular. Cys-100 and Cys-177 are disulfide-bonded. The helical transmembrane segment at 102–123 (VVHFFINLTMYASSFTLAAVSV) threads the bilayer. At 124–143 (DRYLAIRYPLRSRELRTPCN) the chain is on the cytoplasmic side. The helical transmembrane segment at 144 to 164 (AVVAMVVIWGLSLVFAGPYLS) threads the bilayer. Residues 165 to 187 (YYDLIDFENSNVCVPGWEEHNRK) are Extracellular-facing. Residues 188–208 (VLDTCTFVFGYVIPVLIVSLS) form a helical membrane-spanning segment. The Cytoplasmic portion of the chain corresponds to 209-238 (YTRTIKYLWTAVDPLDGMSESKRAKRKVTK). The chain crosses the membrane as a helical span at residues 239–259 (MIIIVTVLFCICWLPYHVVIL). Residues 260 to 276 (CYLYGDFPFNQTTYAFR) lie on the Extracellular side of the membrane. The chain crosses the membrane as a helical span at residues 277-297 (LLSHCMAYANSCLNPIVYALV). Residues 298–378 (SKHFRKGFKK…TITLPFQNQP (81 aa)) lie on the Cytoplasmic side of the membrane. Residues 339 to 362 (EVSQMNEENARQNESEMVNRPLAQ) form a disordered region.

The protein belongs to the G-protein coupled receptor 1 family. In terms of tissue distribution, expressed in neurons in the ventral area of the interpeduncular nucleus (IPN) where expression often overlaps with spx1.

It localises to the membrane. Functionally, receptor for the hormone galanin. Receptor for the hormones spexin-1 and spexin-2. This chain is Galanin receptor 2b, found in Danio rerio (Zebrafish).